The chain runs to 864 residues: Translation initiation factor IF-2 (864 aa).

Residues 140–171 show a composition bias toward basic and acidic residues; sequence DSRSLNTKKENKLKISNKDEQNKKFNQHRESN. The segment at 140 to 179 is disordered; it reads DSRSLNTKKENKLKISNKDEQNKKFNQHRESNSFDLNHKK. Residues 364–533 enclose the tr-type G domain; it reads IRAPVVTIMG…LLQAEMLELK (170 aa). The segment at 373–380 is G1; that stretch reads GHVDHGKT. A GTP-binding site is contributed by 373 to 380; sequence GHVDHGKT. Positions 398 to 402 are G2; the sequence is GITQN. The interval 419 to 422 is G3; that stretch reads DTPG. GTP contacts are provided by residues 419–423 and 473–476; these read DTPGH and NKID. The segment at 473–476 is G4; sequence NKID. Residues 509–511 are G5; it reads SAK.

The protein belongs to the TRAFAC class translation factor GTPase superfamily. Classic translation factor GTPase family. IF-2 subfamily.

The protein localises to the cytoplasm. In terms of biological role, one of the essential components for the initiation of protein synthesis. Protects formylmethionyl-tRNA from spontaneous hydrolysis and promotes its binding to the 30S ribosomal subunits. Also involved in the hydrolysis of GTP during the formation of the 70S ribosomal complex. This is Translation initiation factor IF-2 from Buchnera aphidicola subsp. Acyrthosiphon pisum (strain 5A).